A 207-amino-acid chain; its full sequence is MPKYNVINQLGDLISTKDLKSNVFDIQPHQQALYDVINAQRAAMRQGTHATKTRAFVSGGGKKPWRQKGTGRARHGSIRSPLWRGGGVVFGPSPRNYSVKVNQKVSHLALKSALSSHFRQNQLILVDDFNLDTHKSKDFQKTLQKLNVTSKALIIVTNSNRNLTLASRNLPYVTLETAAHASVYQILNCKNLILTLDAVAYFEEVLK.

Residues 56 to 77 (FVSGGGKKPWRQKGTGRARHGS) are disordered. The segment covering 63-77 (KPWRQKGTGRARHGS) has biased composition (basic residues).

The protein belongs to the universal ribosomal protein uL4 family. In terms of assembly, part of the 50S ribosomal subunit.

In terms of biological role, one of the primary rRNA binding proteins, this protein initially binds near the 5'-end of the 23S rRNA. It is important during the early stages of 50S assembly. It makes multiple contacts with different domains of the 23S rRNA in the assembled 50S subunit and ribosome. Its function is as follows. Forms part of the polypeptide exit tunnel. The sequence is that of Large ribosomal subunit protein uL4 from Phytoplasma australiense.